A 268-amino-acid polypeptide reads, in one-letter code: Proteasome subunit beta type-4 (268 aa).

This sequence belongs to the peptidase T1B family. In terms of assembly, the 26S proteasome consists of a 20S proteasome core and two 19S regulatory subunits. The 20S proteasome core is composed of 28 subunits that are arranged in four stacked rings, resulting in a barrel-shaped structure. The two end rings are each formed by seven alpha subunits, and the two central rings are each formed by seven beta subunits. The catalytic chamber with the active sites is on the inside of the barrel.

It is found in the cytoplasm. The protein resides in the nucleus. Its function is as follows. Non-catalytic component of the proteasome, a multicatalytic proteinase complex which is characterized by its ability to cleave peptides with Arg, Phe, Tyr, Leu, and Glu adjacent to the leaving group at neutral or slightly basic pH. The proteasome has an ATP-dependent proteolytic activity. This is Proteasome subunit beta type-4 (Prosbeta7) from Drosophila melanogaster (Fruit fly).